Reading from the N-terminus, the 388-residue chain is Flavin-dependent monooxygenase (388 aa).

Arginine 54 contributes to the NADPH binding site. 3 residues coordinate FAD: aspartate 61, arginine 117, and aspartate 311.

This sequence belongs to the aromatic-ring hydroxylase family. TetX subfamily. Monomer. Requires FAD as cofactor.

It localises to the cytoplasm. The catalysed reaction is a tetracycline + NADPH + O2 + H(+) = an 11a-hydroxytetracycline + NADP(+) + H2O. The enzyme catalyses tetracycline + NADPH + O2 + H(+) = 11a-hydroxytetracycline + NADP(+) + H2O. It carries out the reaction oxytetracycline + NADPH + O2 + H(+) = 11a-hydroxy-oxytetracycline + NADP(+) + H2O. In terms of biological role, an FAD-requiring monooxygenase active on some tetracycline antibiotic derivatives, which leads to their inactivation. Hydroxylates carbon 11a of tetracycline and some analogs. Functionally, confers resistance to tetracycline via an oxidoreductase activity; NADPH is more active than NAD. Expression in E.coli leads to breakdown of tetracycline. Confers resistance to doxycycline, chlortetracycline, oxytetracycline and minocycline. The polypeptide is Flavin-dependent monooxygenase (Bacteroides fragilis).